The following is a 373-amino-acid chain: Cobalt-precorrin-5B C(1)-methyltransferase (373 aa).

This sequence belongs to the CbiD family.

It carries out the reaction Co-precorrin-5B + S-adenosyl-L-methionine = Co-precorrin-6A + S-adenosyl-L-homocysteine. Its pathway is cofactor biosynthesis; adenosylcobalamin biosynthesis; cob(II)yrinate a,c-diamide from sirohydrochlorin (anaerobic route): step 6/10. Its function is as follows. Catalyzes the methylation of C-1 in cobalt-precorrin-5B to form cobalt-precorrin-6A. The protein is Cobalt-precorrin-5B C(1)-methyltransferase of Listeria welshimeri serovar 6b (strain ATCC 35897 / DSM 20650 / CCUG 15529 / CIP 8149 / NCTC 11857 / SLCC 5334 / V8).